The sequence spans 318 residues: MLPITNSLTYIIPILIAVAFLTLTERKILGYMQLRKGPNITGPYGLLQPIADGLKLFIKEPIRPLNTSPTLLILSPILALTTAMLIWTPIPMPHALTNLNLGLLSILAISSMAVNSTLWAGWASNSKYALIGSLRAVAQTISYEVTLGIILLSILILTGGFTMQLLTTTQKHIWLLTTSWPLTMMWFISTLAETNRAPFDLTEGESELVSGFNVEYAGGPFALFFLAEYTNIISMNLLTCIMFINPGPTQHPELFLINLVTKTLLLSLTFLWIRASYPRFRYDQLMHLLWKQFLPLTMALCLLQASLLVSISGIPPLP.

The next 8 helical transmembrane spans lie at M1 to L21, L71 to P91, L101 to G121, V145 to L165, H172 to A192, F224 to I244, E253 to I273, and L294 to I314.

Belongs to the complex I subunit 1 family.

The protein resides in the mitochondrion inner membrane. It catalyses the reaction a ubiquinone + NADH + 5 H(+)(in) = a ubiquinol + NAD(+) + 4 H(+)(out). Its function is as follows. Core subunit of the mitochondrial membrane respiratory chain NADH dehydrogenase (Complex I) that is believed to belong to the minimal assembly required for catalysis. Complex I functions in the transfer of electrons from NADH to the respiratory chain. The immediate electron acceptor for the enzyme is believed to be ubiquinone. This chain is NADH-ubiquinone oxidoreductase chain 1 (MT-ND1), found in Varanus rudicollis (Rough-necked monitor lizard).